The primary structure comprises 208 residues: MSAIAQNPWLMVLAIFIINVCYVTFLTMRTILTLKGYRYVAAVVSFMEVLVYVVGLGLVMSSLDQIQNIFAYALGFSVGIIVGMKIEEKLALGYTVVNVTSSEYELDLPNELRNLGYGVTHYEAFGRDGSRMVMQILTPRKYELKLMDTVKNLDPKAFIIAYEPRNIHGGFWVKGVRKRKLKAYEPEQLEVVVDHEEIVGGSSNEQKV.

Helical transmembrane passes span Pro-8–Met-28, Val-40–Met-60, and Ile-66–Ile-86.

The protein belongs to the UPF0316 family.

The protein localises to the cell membrane. The polypeptide is UPF0316 protein SERP1448 (Staphylococcus epidermidis (strain ATCC 35984 / DSM 28319 / BCRC 17069 / CCUG 31568 / BM 3577 / RP62A)).